Reading from the N-terminus, the 432-residue chain is 2-oxoglutarate-dependent dioxygenase AOP2 (432 aa).

Residues 281–378 (SGDDVEANDD…RYTAAIFTCP (98 aa)) enclose the Fe2OG dioxygenase domain. Residues His-301, Asp-303, and His-358 each contribute to the Fe cation site. Arg-369 is a binding site for 2-oxoglutarate.

The protein belongs to the iron/ascorbate-dependent oxidoreductase family. It depends on Fe(2+) as a cofactor.

2-oxoglutarate-dependent dioxygenase involved in glucosinolates biosynthesis. Catalyzes the conversion of methylsulfinylalkyl glucosinolates to alkenyl glucosinolates. The polypeptide is 2-oxoglutarate-dependent dioxygenase AOP2 (AOP2) (Arabidopsis thaliana (Mouse-ear cress)).